Consider the following 215-residue polypeptide: Chaperone protein TorD (215 aa).

This sequence belongs to the TorD/DmsD family. TorD subfamily.

The protein localises to the cytoplasm. Functionally, involved in the biogenesis of TorA. Acts on TorA before the insertion of the molybdenum cofactor and, as a result, probably favors a conformation of the apoenzyme that is competent for acquiring the cofactor. The sequence is that of Chaperone protein TorD from Aliivibrio salmonicida (strain LFI1238) (Vibrio salmonicida (strain LFI1238)).